A 308-amino-acid chain; its full sequence is Oxygen-dependent coproporphyrinogen-III oxidase (308 aa).

S97 contributes to the substrate binding site. The a divalent metal cation site is built by H101 and H111. The active-site Proton donor is the H111. 113–115 (NVR) lines the substrate pocket. A divalent metal cation-binding residues include H153 and H183. An important for dimerization region spans residues 248–283 (YVEFNLVWDRGTHFGLQSGGRTESILMSMPPLASWS). 266–268 (GGR) lines the substrate pocket.

The protein belongs to the aerobic coproporphyrinogen-III oxidase family. In terms of assembly, homodimer. A divalent metal cation serves as cofactor.

The protein localises to the cytoplasm. It carries out the reaction coproporphyrinogen III + O2 + 2 H(+) = protoporphyrinogen IX + 2 CO2 + 2 H2O. The protein operates within porphyrin-containing compound metabolism; protoporphyrin-IX biosynthesis; protoporphyrinogen-IX from coproporphyrinogen-III (O2 route): step 1/1. In terms of biological role, involved in the heme biosynthesis. Catalyzes the aerobic oxidative decarboxylation of propionate groups of rings A and B of coproporphyrinogen-III to yield the vinyl groups in protoporphyrinogen-IX. The protein is Oxygen-dependent coproporphyrinogen-III oxidase of Polaromonas sp. (strain JS666 / ATCC BAA-500).